The following is a 271-amino-acid chain: L-aspartate dehydrogenase (271 aa).

The NAD(+) site is built by Ala-124 and Asn-192. His-222 is a catalytic residue.

It belongs to the L-aspartate dehydrogenase family.

It carries out the reaction L-aspartate + NADP(+) + H2O = oxaloacetate + NH4(+) + NADPH + H(+). The enzyme catalyses L-aspartate + NAD(+) + H2O = oxaloacetate + NH4(+) + NADH + H(+). The protein operates within cofactor biosynthesis; NAD(+) biosynthesis; iminoaspartate from L-aspartate (dehydrogenase route): step 1/1. Its function is as follows. Specifically catalyzes the NAD or NADP-dependent dehydrogenation of L-aspartate to iminoaspartate. This is L-aspartate dehydrogenase from Methanosarcina barkeri (strain Fusaro / DSM 804).